The following is a 944-amino-acid chain: Putative ATP-dependent RNA helicase (944 aa).

The 170-residue stretch at 66–235 (TTPRSPIDGI…VPLHNLLMKL (170 aa)) folds into the Helicase ATP-binding domain. Residue 79–86 (HGVGTGKT) coordinates ATP. Residues 183-186 (DEAH) carry the DEAH box motif. The region spanning 451–523 (CLTREVMTVP…QIIGRGIRYQ (73 aa)) is the Helicase C-terminal domain.

It belongs to the DEAD box helicase family. DEAH subfamily.

The enzyme catalyses ATP + H2O = ADP + phosphate + H(+). The sequence is that of Putative ATP-dependent RNA helicase from Heliothis virescens ascovirus 3e (HvAV-3e).